The chain runs to 159 residues: Putative ribosomal RNA large subunit methyltransferase H (159 aa).

S-adenosyl-L-methionine contacts are provided by residues Leu76, Gly108, and 127–132 (FSKMTF).

It belongs to the RNA methyltransferase RlmH family.

The protein resides in the cytoplasm. The enzyme catalyses pseudouridine(1915) in 23S rRNA + S-adenosyl-L-methionine = N(3)-methylpseudouridine(1915) in 23S rRNA + S-adenosyl-L-homocysteine + H(+). Functionally, specifically methylates the pseudouridine at position 1915 (m3Psi1915) in 23S rRNA. The sequence is that of Putative ribosomal RNA large subunit methyltransferase H from Methanococcus maripaludis (strain C6 / ATCC BAA-1332).